The primary structure comprises 219 residues: Sporamin A (219 aa).

Residues 1–23 (MKALTLALFLALSLYLLPNPAHS) form the signal peptide.

It belongs to the protease inhibitor I3 (leguminous Kunitz-type inhibitor) family. As to expression, accumulates specifically in tuberous roots and tubers upon tuberization. Sporamin accounts 60 to 80% of the total soluble protein of the organ.

It localises to the vacuole. Major tuberous root protein. The sequence is that of Sporamin A (GSPO-A1) from Ipomoea batatas (Sweet potato).